Here is a 416-residue protein sequence, read N- to C-terminus: 5-hydroxytryptamine receptor 1A-beta (416 aa).

The Extracellular segment spans residues 1-35; sequence MEGTNNTTGWTHFDSTSNRTSKSFDEEVKLSYQVV. Residues N5, N6, and N18 are each glycosylated (N-linked (GlcNAc...) asparagine). The chain crosses the membrane as a helical span at residues 36–56; it reads TSFLLGALILCSIFGNACVVA. The Cytoplasmic portion of the chain corresponds to 57–70; that stretch reads AIALERSLQNVANY. Residues 71 to 95 form a helical membrane-spanning segment; that stretch reads LIGSLAVTDLMVSVLVLPMAALYQV. Over 96-104 the chain is Extracellular; that stretch reads LNRWTLGQI. The helical transmembrane segment at 105-129 threads the bilayer; that stretch reads PCDIFISLDMLCCTSSILHLCVIAL. The cysteines at positions 106 and 189 are disulfide-linked. Positions 113 and 117 each coordinate serotonin. The short motif at 130-132 is the DRY motif; important for ligand-induced conformation changes element; sequence DRY. Over 130-149 the chain is Cytoplasmic; it reads DRYWAITEPIDYMKKRTPRR. The chain crosses the membrane as a helical span at residues 150–171; that stretch reads AAVLISVTWLVGFSISIPPMLI. The Extracellular portion of the chain corresponds to 172 to 195; the sequence is MRSQPSSMAEDRANSKQCKITQDP. Residues 196-218 traverse the membrane as a helical segment; sequence WYTIYSTFGAFYIPLTLMLVLYG. Over 219–340 the chain is Cytoplasmic; sequence RIFKAARFRI…LARERKTVKT (122 aa). 3 residues coordinate 1D-myo-inositol 4-phosphate: K339, T340, and G346. Residues 341–364 form a helical membrane-spanning segment; the sequence is LGIIMGTFILCWLPFFIVALVMPF. Topologically, residues 365 to 372 are extracellular; it reads CQESCFMP. A helical membrane pass occupies residues 373-397; it reads HWLKDVINWLGYSNSLLNPIIYAYF. Residues 390–394 carry the NPxxY motif; important for ligand-induced conformation changes and signaling motif; the sequence is NPIIY. 1D-myo-inositol 4-phosphate-binding residues include F397, N398, and K399. Residues 398 to 416 are Cytoplasmic-facing; it reads NKDFQSAFKKIIKCHFCRA.

The protein belongs to the G-protein coupled receptor 1 family. 5-hydroxytryptamine receptor subfamily.

The protein localises to the cell membrane. Its activity is regulated as follows. G-protein coupled receptor activity is regulated by lipids: phosphatidylinositol 4-phosphate increases HTR1A-mediated activity. In terms of biological role, G-protein coupled receptor for 5-hydroxytryptamine (serotonin). Also functions as a receptor for various drugs and psychoactive substances. Ligand binding causes a conformation change that triggers signaling via guanine nucleotide-binding proteins (G proteins) and modulates the activity of downstream effectors, such as adenylate cyclase. HTR1A is coupled to G(i)/G(o) G alpha proteins and mediates inhibitory neurotransmission: signaling inhibits adenylate cyclase activity and activates a phosphatidylinositol-calcium second messenger system that regulates the release of Ca(2+) ions from intracellular stores. Beta-arrestin family members regulate signaling by mediating both receptor desensitization and resensitization processes. The sequence is that of 5-hydroxytryptamine receptor 1A-beta (htr1a-B) from Takifugu rubripes (Japanese pufferfish).